We begin with the raw amino-acid sequence, 151 residues long: Large ribosomal subunit protein bL9 (151 aa).

The protein belongs to the bacterial ribosomal protein bL9 family.

Functionally, binds to the 23S rRNA. The protein is Large ribosomal subunit protein bL9 of Bordetella petrii (strain ATCC BAA-461 / DSM 12804 / CCUG 43448).